A 95-amino-acid polypeptide reads, in one-letter code: Aspartyl/glutamyl-tRNA(Asn/Gln) amidotransferase subunit C (95 aa).

This sequence belongs to the GatC family. Heterotrimer of A, B and C subunits.

It catalyses the reaction L-glutamyl-tRNA(Gln) + L-glutamine + ATP + H2O = L-glutaminyl-tRNA(Gln) + L-glutamate + ADP + phosphate + H(+). The catalysed reaction is L-aspartyl-tRNA(Asn) + L-glutamine + ATP + H2O = L-asparaginyl-tRNA(Asn) + L-glutamate + ADP + phosphate + 2 H(+). Allows the formation of correctly charged Asn-tRNA(Asn) or Gln-tRNA(Gln) through the transamidation of misacylated Asp-tRNA(Asn) or Glu-tRNA(Gln) in organisms which lack either or both of asparaginyl-tRNA or glutaminyl-tRNA synthetases. The reaction takes place in the presence of glutamine and ATP through an activated phospho-Asp-tRNA(Asn) or phospho-Glu-tRNA(Gln). This Chlorobium phaeobacteroides (strain BS1) protein is Aspartyl/glutamyl-tRNA(Asn/Gln) amidotransferase subunit C.